The sequence spans 1517 residues: DNA-directed RNA polymerase subunit beta' (1517 aa).

4 residues coordinate Zn(2+): Cys-71, Cys-73, Cys-86, and Cys-89. 3 residues coordinate Mg(2+): Asp-482, Asp-484, and Asp-486. 4 residues coordinate Zn(2+): Cys-812, Cys-886, Cys-893, and Cys-896.

The protein belongs to the RNA polymerase beta' chain family. In terms of assembly, the RNAP catalytic core consists of 2 alpha, 1 beta, 1 beta' and 1 omega subunit. When a sigma factor is associated with the core the holoenzyme is formed, which can initiate transcription. It depends on Mg(2+) as a cofactor. Zn(2+) is required as a cofactor.

The catalysed reaction is RNA(n) + a ribonucleoside 5'-triphosphate = RNA(n+1) + diphosphate. In terms of biological role, DNA-dependent RNA polymerase catalyzes the transcription of DNA into RNA using the four ribonucleoside triphosphates as substrates. The sequence is that of DNA-directed RNA polymerase subunit beta' from Campylobacter jejuni subsp. jejuni serotype O:2 (strain ATCC 700819 / NCTC 11168).